A 298-amino-acid polypeptide reads, in one-letter code: Probable GTP 3',8-cyclase (298 aa).

The 218-residue stretch at 4–221 folds into the Radical SAM core domain; that stretch reads RYGREIRSFR…VFTRKFMQNR (218 aa). Position 13 (arginine 13) interacts with GTP. Cysteine 20 and cysteine 24 together coordinate [4Fe-4S] cluster. Tyrosine 26 is an S-adenosyl-L-methionine binding site. Position 27 (cysteine 27) interacts with [4Fe-4S] cluster. Residue lysine 61 coordinates GTP. Glycine 65 is a binding site for S-adenosyl-L-methionine. Threonine 91 provides a ligand contact to GTP. Serine 115 is a binding site for S-adenosyl-L-methionine. Lysine 152 serves as a coordination point for GTP. Cysteine 243 and cysteine 246 together coordinate [4Fe-4S] cluster. Residue 248–250 participates in GTP binding; it reads RIR. Cysteine 260 contacts [4Fe-4S] cluster.

It belongs to the radical SAM superfamily. MoaA family. [4Fe-4S] cluster is required as a cofactor.

It carries out the reaction GTP + AH2 + S-adenosyl-L-methionine = (8S)-3',8-cyclo-7,8-dihydroguanosine 5'-triphosphate + 5'-deoxyadenosine + L-methionine + A + H(+). Its pathway is cofactor biosynthesis; molybdopterin biosynthesis. Catalyzes the cyclization of GTP to (8S)-3',8-cyclo-7,8-dihydroguanosine 5'-triphosphate. This Methanococcus maripaludis (strain C7 / ATCC BAA-1331) protein is Probable GTP 3',8-cyclase.